We begin with the raw amino-acid sequence, 464 residues long: MMLLYYALSFILLPIYFIIILIRLLIGKEDIRRIQERFAIGKHRQVYSLDFLHNEANKERFKGDTERRTAAYTSVREDSSTGSTSKLPLEASYARSLIWIHAASVGESMAALTLISNISKRYPDIRFLVTSWTNSSAKILTAKLPKIAVHQFLPIDNIIFTRKFLKNWQPNLGIFIESELWPCTINEGARQCKLLLVNARISDKSFKAWLKRKSFFQLILKNFSKIIVQSERDLQKFNELGISDAINLGNIKFANEKLPVNQEELSKLSSHLDNRQVVVFASTHPEDEEVILPIIKNLKEQFLDCYIILIPRHPERVKSIIDNCKSHNLSATAKSQNDLPVLSDDIYIVDRFGEMGLFFSVATISFIGGSFKQGGHNILEAAYFSNCIIFGPDMSKNTDIAKGVLQNEAAIQIKNGEDLLTKLTYLLSPNNSLELKAYRENALKFVENNQKVLDEYLQVITKFL.

The helical; Signal-anchor transmembrane segment at 2-22 threads the bilayer; the sequence is MLLYYALSFILLPIYFIIILI. An RPE1 insert domain is found at 47 to 93; sequence YSLDFLHNEANKERFKGDTERRTAAYTSVREDSSTGSTSKLPLEASY. Residue Glu107 is the Proton acceptor of the active site. CMP contacts are provided by residues 311–312, 352–354, and 377–380; these read PR, FGE, and NILE.

The protein belongs to the glycosyltransferase group 1 family.

The protein resides in the cell inner membrane. The catalysed reaction is lipid IVA (E. coli) + CMP-3-deoxy-beta-D-manno-octulosonate = alpha-Kdo-(2-&gt;6)-lipid IVA (E. coli) + CMP + H(+). Its pathway is bacterial outer membrane biogenesis; LPS core biosynthesis. Its function is as follows. Involved in lipopolysaccharide (LPS) biosynthesis. Catalyzes the transfer of 3-deoxy-D-manno-octulosonate (Kdo) residue(s) from CMP-Kdo to lipid IV(A), the tetraacyldisaccharide-1,4'-bisphosphate precursor of lipid A. This chain is 3-deoxy-D-manno-octulosonic acid transferase (waaA), found in Rickettsia felis (strain ATCC VR-1525 / URRWXCal2) (Rickettsia azadi).